A 1121-amino-acid chain; its full sequence is Phytochrome 2 (1121 aa).

A GAF domain is found at 214–393; it reads DIGLLCDTVV…VFGMQLNMEV (180 aa). Cys-319 is a phytochromobilin binding site. PAS domains are found at residues 608-679 and 742-813; these read VANE…SQGE and DYKT…TKFM. Residues 893–1113 form the Histidine kinase domain; it reads YIRQEIKNPL…VVYVELPMAQ (221 aa).

This sequence belongs to the phytochrome family. In terms of assembly, homodimer. In terms of processing, contains one covalently linked phytochromobilin chromophore.

Its function is as follows. Regulatory photoreceptor which exists in two forms that are reversibly interconvertible by light: the Pr form that absorbs maximally in the red region of the spectrum and the Pfr form that absorbs maximally in the far-red region. Photoconversion of Pr to Pfr induces an array of morphogenic responses, whereas reconversion of Pfr to Pr cancels the induction of those responses. Pfr controls the expression of a number of nuclear genes including those encoding the small subunit of ribulose-bisphosphate carboxylase, chlorophyll A/B binding protein, protochlorophyllide reductase, rRNA, etc. It also controls the expression of its own gene(s) in a negative feedback fashion. This Ceratodon purpureus (Fire moss) protein is Phytochrome 2 (PHY2).